A 198-amino-acid polypeptide reads, in one-letter code: HTH-type transcriptional regulator BetI (198 aa).

The HTH tetR-type domain maps to Pro8–Leu68. Residues Thr31–Phe50 constitute a DNA-binding region (H-T-H motif).

Its pathway is amine and polyamine biosynthesis; betaine biosynthesis via choline pathway [regulation]. Repressor involved in the biosynthesis of the osmoprotectant glycine betaine. It represses transcription of the choline transporter BetT and the genes of BetAB involved in the synthesis of glycine betaine. This chain is HTH-type transcriptional regulator BetI, found in Brucella suis (strain ATCC 23445 / NCTC 10510).